The primary structure comprises 140 residues: Nucleoside diphosphate kinase (140 aa).

Positions 11, 59, 87, 93, 104, and 114 each coordinate ATP. The Pros-phosphohistidine intermediate role is filled by His117.

It belongs to the NDK family. As to quaternary structure, homotetramer. It depends on Mg(2+) as a cofactor.

The protein localises to the cytoplasm. The enzyme catalyses a 2'-deoxyribonucleoside 5'-diphosphate + ATP = a 2'-deoxyribonucleoside 5'-triphosphate + ADP. It catalyses the reaction a ribonucleoside 5'-diphosphate + ATP = a ribonucleoside 5'-triphosphate + ADP. In terms of biological role, major role in the synthesis of nucleoside triphosphates other than ATP. The ATP gamma phosphate is transferred to the NDP beta phosphate via a ping-pong mechanism, using a phosphorylated active-site intermediate. This is Nucleoside diphosphate kinase from Bradyrhizobium diazoefficiens (strain JCM 10833 / BCRC 13528 / IAM 13628 / NBRC 14792 / USDA 110).